We begin with the raw amino-acid sequence, 452 residues long: Chromosomal replication initiator protein DnaA (452 aa).

The interval 1–72 (MPDMLTLWTD…LVEYAYQAAH (72 aa)) is domain I, interacts with DnaA modulators. Positions 72-114 (HEDIQPVLILENERQQQATLKAKTAPVAAGEPVEPTPTFMKET) are domain II. Residues 115–331 (ALNSRYTFDT…GALARVQAYS (217 aa)) are domain III, AAA+ region. 4 residues coordinate ATP: Gly-159, Gly-161, Lys-162, and Thr-163. Residues 332–452 (QLMHQPIATD…IDSLKDDLRR (121 aa)) are domain IV, binds dsDNA.

The protein belongs to the DnaA family. Oligomerizes as a right-handed, spiral filament on DNA at oriC.

It is found in the cytoplasm. Its function is as follows. Plays an essential role in the initiation and regulation of chromosomal replication. ATP-DnaA binds to the origin of replication (oriC) to initiate formation of the DNA replication initiation complex once per cell cycle. Binds the DnaA box (a 9 base pair repeat at the origin) and separates the double-stranded (ds)DNA. Forms a right-handed helical filament on oriC DNA; dsDNA binds to the exterior of the filament while single-stranded (ss)DNA is stabiized in the filament's interior. The ATP-DnaA-oriC complex binds and stabilizes one strand of the AT-rich DNA unwinding element (DUE), permitting loading of DNA polymerase. After initiation quickly degrades to an ADP-DnaA complex that is not apt for DNA replication. Binds acidic phospholipids. The chain is Chromosomal replication initiator protein DnaA from Levilactobacillus brevis (strain ATCC 367 / BCRC 12310 / CIP 105137 / JCM 1170 / LMG 11437 / NCIMB 947 / NCTC 947) (Lactobacillus brevis).